Consider the following 430-residue polypeptide: Histidinol dehydrogenase (430 aa).

Residues serine 237, glutamine 259, and histidine 262 each contribute to the substrate site. Residues glutamine 259 and histidine 262 each coordinate Zn(2+). Active-site proton acceptor residues include glutamate 327 and histidine 328. Substrate contacts are provided by histidine 328, aspartate 361, glutamate 415, and histidine 420. Aspartate 361 is a Zn(2+) binding site. Histidine 420 provides a ligand contact to Zn(2+).

This sequence belongs to the histidinol dehydrogenase family. Zn(2+) serves as cofactor.

The catalysed reaction is L-histidinol + 2 NAD(+) + H2O = L-histidine + 2 NADH + 3 H(+). Its pathway is amino-acid biosynthesis; L-histidine biosynthesis; L-histidine from 5-phospho-alpha-D-ribose 1-diphosphate: step 9/9. Catalyzes the sequential NAD-dependent oxidations of L-histidinol to L-histidinaldehyde and then to L-histidine. The sequence is that of Histidinol dehydrogenase from Sulfurimonas denitrificans (strain ATCC 33889 / DSM 1251) (Thiomicrospira denitrificans (strain ATCC 33889 / DSM 1251)).